The sequence spans 144 residues: Maximins 8/H7 (144 aa).

The first 18 residues, 1–18, serve as a signal peptide directing secretion; it reads MKFKYIVAVSFLIASAYA. A propeptide spanning residues 19–43 is cleaved from the precursor; sequence RSEENDEQSLSQRDVLEEESLREIR. Asparagine 70 carries the post-translational modification Asparagine amide. Positions 74-123 are excised as a propeptide; it reads TAEDHEVMKRLEAVMRDLDSLDYPEEASERETRGFNQEEIANLFTKKEKR. Leucine 143 is subject to Leucine amide.

It belongs to the bombinin family. In terms of tissue distribution, expressed by the skin glands.

The protein resides in the secreted. In terms of biological role, maximin-8 shows antimicrobial activity against bacteria and against the fungus C.albicans. It has little hemolytic activity. Functionally, maximin-H7 shows antimicrobial activity against bacteria and against the fungus C.albicans. Shows strong hemolytic activity. This Bombina maxima (Giant fire-bellied toad) protein is Maximins 8/H7.